Consider the following 464-residue polypeptide: Protein FAM90A8 (464 aa).

Disordered stretches follow at residues 1-42 (MMAR…DPRL), 69-389 (VPAT…HDGA), and 415-437 (HSPE…SEAP). 2 stretches are compositionally biased toward basic and acidic residues: residues 74–89 (GKKE…KPRG) and 97–114 (NKDK…DPQR). The span at 180–197 (LASLSPLRKASLSSSSSL) shows a compositional bias: low complexity.

Belongs to the FAM90 family.

The chain is Protein FAM90A8 (FAM90A8) from Homo sapiens (Human).